We begin with the raw amino-acid sequence, 167 residues long: Large ribosomal subunit protein uL23 (167 aa).

The large ribosomal subunit protein uL23 stretch occupies residues 1–130; sequence MNVNEIIKGP…ELEAKNKEIA (130 aa). Disordered stretches follow at residues 91–112 and 137–167; these read FEDE…TDEK and QAEL…NSAK. Basic and acidic residues-rich tracts occupy residues 97 to 112 and 137 to 157; these read QDQK…TDEK and QAEL…KIEN. Residues 131–167 are unknown; it reads EKLAKKQAELAKKESETNENQEKKIENQTENQENSAK. Polar residues predominate over residues 158–167; sequence QTENQENSAK.

Belongs to the universal ribosomal protein uL23 family. As to quaternary structure, part of the 50S ribosomal subunit. Contacts protein L29, and trigger factor when it is bound to the ribosome.

In terms of biological role, one of the early assembly proteins it binds 23S rRNA. One of the proteins that surrounds the polypeptide exit tunnel on the outside of the ribosome. Forms the main docking site for trigger factor binding to the ribosome. This is Large ribosomal subunit protein uL23 from Mesomycoplasma hyopneumoniae (strain 7448) (Mycoplasma hyopneumoniae).